Reading from the N-terminus, the 387-residue chain is Leucine aminopeptidase 1 (387 aa).

Positions 1–18 are cleaved as a signal peptide; sequence MKIRAALALSATASGVLA. A propeptide spanning residues 19 to 87 is cleaved from the precursor; that stretch reads AVVPQQALLN…YPTLHQASNV (69 aa). Asn-179 carries N-linked (GlcNAc...) asparagine glycosylation. Zn(2+)-binding residues include His-187, Asp-206, Glu-245, and Asp-272. An intrachain disulfide couples Cys-321 to Cys-325. His-354 is a Zn(2+) binding site.

It belongs to the peptidase M28 family. M28E subfamily. Monomer. The cofactor is Zn(2+).

It is found in the secreted. In terms of biological role, extracellular aminopeptidase that allows assimilation of proteinaceous substrates. This Aspergillus oryzae (strain ATCC 42149 / RIB 40) (Yellow koji mold) protein is Leucine aminopeptidase 1 (lap1).